The primary structure comprises 298 residues: Ketohexokinase (298 aa).

Residues Asp15, Gly41, Asn42, and Asn45 each contribute to the beta-D-fructose site. ATP is bound by residues Arg108, 226-229 (AEEG), and 255-258 (GAGD). Asp258 contributes to the beta-D-fructose binding site.

This sequence belongs to the carbohydrate kinase PfkB family. Homodimer. As to expression, most abundant in liver, kidney, gut, spleen and pancreas. Low levels also found in adrenal, muscle, brain and eye.

The catalysed reaction is beta-D-fructose + ATP = beta-D-fructose 1-phosphate + ADP + H(+). It functions in the pathway carbohydrate metabolism; fructose metabolism. Requires potassium. Inhibition by ADP. Functionally, catalyzes the phosphorylation of the ketose sugar fructose to fructose-1-phosphate. This is Ketohexokinase from Homo sapiens (Human).